The primary structure comprises 357 residues: MNTLFMHCRPGFEGEVCSEIADHAARLDVAGYAKARPDTACAEFICTEADGAERLMNGQRFDKLIFPRQWARGLFLELPETDRISVILAQLAAFPICGSLWLEVVDTNDGKELSNFCKKFEAPLRKALTQAGKLVDDPRKPRLLLTFKSGREVFLGLADADNSAMWPMGIPRLKFPREAPSRSTLKLEEAWHHFIPRDQWDERLSGDMTSVDLGAAPGGWTYQLVRRGMLVTAIDNGPMAESLMDTGLVQHLMADGFTYKPRQPVDWMVCDIVEKPARNAALLETWLGEGLCREAVVNLKLPMKQRYAEVRRLLDRIEEGFQARGVRVSIGCKQLYHDREEVTCHLRRLDVAKAARK.

S-adenosyl-L-methionine is bound by residues Ser-183, 216-219 (APGG), Asp-235, Asp-255, and Asp-271. Residue Lys-300 is the Proton acceptor of the active site.

Belongs to the class I-like SAM-binding methyltransferase superfamily. RNA methyltransferase RlmE family. RlmM subfamily. In terms of assembly, monomer.

It localises to the cytoplasm. It catalyses the reaction cytidine(2498) in 23S rRNA + S-adenosyl-L-methionine = 2'-O-methylcytidine(2498) in 23S rRNA + S-adenosyl-L-homocysteine + H(+). Catalyzes the 2'-O-methylation at nucleotide C2498 in 23S rRNA. This Pseudomonas syringae pv. syringae (strain B728a) protein is Ribosomal RNA large subunit methyltransferase M.